The following is a 163-amino-acid chain: Small ribosomal subunit protein uS7 (163 aa).

Belongs to the universal ribosomal protein uS7 family. In terms of assembly, part of the 30S ribosomal subunit. Contacts proteins S9 and S11.

One of the primary rRNA binding proteins, it binds directly to 16S rRNA where it nucleates assembly of the head domain of the 30S subunit. Is located at the subunit interface close to the decoding center, probably blocks exit of the E-site tRNA. The polypeptide is Small ribosomal subunit protein uS7 (Rickettsia bellii (strain RML369-C)).